The primary structure comprises 59 residues: Large ribosomal subunit protein uL30 (59 aa).

This sequence belongs to the universal ribosomal protein uL30 family. In terms of assembly, part of the 50S ribosomal subunit.

The polypeptide is Large ribosomal subunit protein uL30 (Erwinia tasmaniensis (strain DSM 17950 / CFBP 7177 / CIP 109463 / NCPPB 4357 / Et1/99)).